The following is a 235-amino-acid chain: 15,16-dihydrobiliverdin:ferredoxin oxidoreductase (235 aa).

This sequence belongs to the HY2 family.

The enzyme catalyses 15,16-dihydrobiliverdin + oxidized 2[4Fe-4S]-[ferredoxin] = biliverdin IXalpha + reduced 2[4Fe-4S]-[ferredoxin] + 2 H(+). Functionally, catalyzes the two-electron reduction of biliverdin IX-alpha at the C15 methine bridge. This Parasynechococcus marenigrum (strain WH8102) protein is 15,16-dihydrobiliverdin:ferredoxin oxidoreductase (pebA).